The chain runs to 62 residues: Small ribosomal subunit protein uS14 (62 aa).

4 residues coordinate Zn(2+): C25, C28, C41, and C44.

It belongs to the universal ribosomal protein uS14 family. Zinc-binding uS14 subfamily. In terms of assembly, part of the 30S ribosomal subunit. Contacts proteins S3 and S10. The cofactor is Zn(2+).

In terms of biological role, binds 16S rRNA, required for the assembly of 30S particles and may also be responsible for determining the conformation of the 16S rRNA at the A site. This is Small ribosomal subunit protein uS14 from Sulfurihydrogenibium sp. (strain YO3AOP1).